Here is a 372-residue protein sequence, read N- to C-terminus: MPRPSRESYGEQKPPYSYISLTAMAIWSSPEKMLPLSDIYKFITDRFPYYRKNTQRWQNSLRHNLSFNDCFIKVPRRPDRPGKGAYWALHPQAFDMFENGSLLRRRKRFKLHKNDKDLLNEELTALANLNRFFFTTRNGGSAAHMSPLDMNNAAAMRLDPLPRSTAHMPNSLGPGVPLPHVMPASMSGADHTNLADMGLTNLPALTSSEIEGPLSLRPKRSFTIESLITPDKPEHPSEDEDDEDDRVDIDVVECSGISRYPTTPAASEEYMSASRSSRTEDPLPPMHTINAGAHVPFLHYATGANVAGLPASGIPNSPTTYELAISHPLFMMAAPIANMHNIYYNNVTLVAPAQQYRSPEVQNRIDNDMRTI.

Residues 12–103 constitute a DNA-binding region (fork-head); sequence QKPPYSYISL…FDMFENGSLL (92 aa). 2 disordered regions span residues 225-245 and 261-281; these read ESLI…DEDD and PTTP…RTED.

In terms of tissue distribution, expressed in early embryogenesis in 14 symmetrical pairs of segmentally arranged neuroblasts. Also, later in embryogenesis, in a cluster of cells in head region.

It is found in the nucleus. In terms of biological role, involved in development during embryogenesis. The protein is Fork head domain-containing protein FD4 (fd96Ca) of Drosophila melanogaster (Fruit fly).